We begin with the raw amino-acid sequence, 337 residues long: MARHHQPRKGSVAFSPRKRAARETPRVKSWPQVDEPGLLALAGYKAGMTHVMMVDNQKNSPTEGMEVSTPVTILEVPPLTVMAVRTYEKTSRGLKTLGEVLATETKDDLRRKLTPPADDYDQEAAIEKIRSNMEYVADVRVIVHTNPRLASVPKKKPEVFECGLGGKTPEEKFEYALEILGKDVRASEIFSEGAFVDAIAVTKGKGFQGPVKRWGIRIQYGKAARSSKGRHIGSLGPWTPSRTMWTVPQAGQMGYHRRTEYNKQILKIGDASEADLVNPDGGFVRYGLVRNDYVMIKGSVPGPTKRLVVLRKAIRAAGKQEEAPQINYISTASKQGV.

A disordered region spans residues 1-29; sequence MARHHQPRKGSVAFSPRKRAARETPRVKS.

It belongs to the universal ribosomal protein uL3 family. As to quaternary structure, part of the 50S ribosomal subunit. Forms a cluster with proteins L14 and L24e.

Its function is as follows. One of the primary rRNA binding proteins, it binds directly near the 3'-end of the 23S rRNA, where it nucleates assembly of the 50S subunit. In Methanothermobacter thermautotrophicus (strain ATCC 29096 / DSM 1053 / JCM 10044 / NBRC 100330 / Delta H) (Methanobacterium thermoautotrophicum), this protein is Large ribosomal subunit protein uL3.